A 436-amino-acid chain; its full sequence is Gamma-glutamyl phosphate reductase (436 aa).

Belongs to the gamma-glutamyl phosphate reductase family.

Its subcellular location is the cytoplasm. The enzyme catalyses L-glutamate 5-semialdehyde + phosphate + NADP(+) = L-glutamyl 5-phosphate + NADPH + H(+). It participates in amino-acid biosynthesis; L-proline biosynthesis; L-glutamate 5-semialdehyde from L-glutamate: step 2/2. In terms of biological role, catalyzes the NADPH-dependent reduction of L-glutamate 5-phosphate into L-glutamate 5-semialdehyde and phosphate. The product spontaneously undergoes cyclization to form 1-pyrroline-5-carboxylate. The protein is Gamma-glutamyl phosphate reductase of Prochlorococcus marinus (strain MIT 9312).